Reading from the N-terminus, the 610-residue chain is Butyryl-CoA dehydrogenase Swol_1933 (610 aa).

Catalysis depends on glutamate 451, which acts as the Proton acceptor.

The protein belongs to the acyl-CoA dehydrogenase family. FAD is required as a cofactor.

The protein localises to the cytoplasm. It catalyses the reaction butanoyl-CoA + oxidized [electron-transfer flavoprotein] + H(+) = (2E)-butenoyl-CoA + reduced [electron-transfer flavoprotein]. It carries out the reaction a short-chain 2,3-saturated fatty acyl-CoA + oxidized [electron-transfer flavoprotein] + H(+) = a short-chain (2E)-enoyl-CoA + reduced [electron-transfer flavoprotein]. The protein operates within lipid metabolism; butanoate metabolism. Its function is as follows. Involved in syntrophic growth of S.wolfei with butyrate, as part of the butyrate oxidation pathway. Catalyzes the oxidation of butanoyl-CoA to crotonyl-CoA. Probably passes the electrons released by this reaction on to electron-transfer flavoproteins (EtfAB) to finally generate hydrogen and/or formate. This Syntrophomonas wolfei subsp. wolfei (strain DSM 2245B / Goettingen) protein is Butyryl-CoA dehydrogenase Swol_1933.